The sequence spans 586 residues: Scavenger receptor cysteine-rich domain-containing group B protein (586 aa).

The segment at 1–33 (MGPSERPSIGWTPKEAEMQIGPQPDGWSRGWKP) is disordered. An N-terminal signal peptide occupies residues 1-58 (MGPSERPSIGWTPKEAEMQIGPQPDGWSRGWKPGDRGAVPLPLSPALSFLLLFPLASA). SRCR domains lie at 69–169 (LRLV…VLCD), 200–300 (VRLV…VLCA), 355–455 (LRLV…ALCA), and 484–584 (LRLA…VLCQ). Cystine bridges form between Cys94/Cys158, Cys107/Cys168, Cys138/Cys148, Cys225/Cys289, Cys238/Cys299, Cys269/Cys279, Cys380/Cys444, Cys393/Cys454, Cys424/Cys434, Cys509/Cys573, Cys522/Cys583, and Cys553/Cys563.

It is found in the secreted. This chain is Scavenger receptor cysteine-rich domain-containing group B protein, found in Mus musculus (Mouse).